Consider the following 1249-residue polypeptide: MHSDPGPWHPLLCFLVLALSTSANSDVTPRFTSKPLSTVQKPGGPVTLLCSAEPPWAHISWLFNGEQFERISSQGVDIQSGHLVIPSLGPAHVGQYQCIASTSVGAILSKSVSVSVAYLNDFETTTGHSVTAEEGSSAFIGCKIPESNPKAHVRYKVRGKWLKESSDKYLILPSGNLHILNVSVEDRGTYRCAAYNPVTHDLKLSTSTLKLSVNRSPRVDSRILHPVTSQAVLVQIHDPLTLECVVGGGPSHPPVYWYKGGQEAAAYGRRKLLHTHLVIEQVQRSDAGNYSCVLGNGSGISQRVYYTVIVLEPPSVSQKTEDQSLTAGSNVRFSCESRGNPTPNITWFHNAVQIHASTRHQISGNKIRITSLFAQDSGIYQCFVNNEAGSAQVSQRATVHLKWSKPVIVSPPTSIRVANGDLVTLTCNATGIPTPTIRWYDSHGPISSHPSQVLRSKSRKALLSKIGTPGQDPVHYTMSQAGSSSLYIRAITVQHAGTYKCEATNEFGSAHADAYLTVVPYEMSTKPEDITPLDLTQSDEGDYDSETRVPDHSQINEHKPEPRVTEKPYSGASLPEAPIILSPPQTTKPDMYNLMWRSGKDGGLPINAYFVRYRKLDDDGNMVGNWNSIRVPASENEFPLTELEPSSLYEVLMVARNAAGEGQPAMLTFRTSKERTSSSKNTQAPFPPIGVPKQTIIHGVSNTNNGLVPVDPSRHSGVPEAPDRPTISTASETSVYVTWIPRANGGSPITSFKVEYKRTGGHWNAAAENIPPSKLSVEVSNLEPGGLYKFRVIAINNYGESRRSTVSRPYQVAGYSIRLPNPLIVGPRIDQTEAVTDTQILLKWTYIPENNNNTPIQGFYIYYRPTDSDNDSDYKRDMVEGTKLRHLISHLQPETSYDIKMQCFNERGASDYSNVMMCETKARRSPGASEYPVLDLSTPSVPDRSSSPSHSPTRNGDFLYVIVGCVLGGMVLILLAFIAMCLLKNRQQTLMQKFEPPGYLYQGADLNGQIIEYTTLPGTSRINGSVHTGFMGNGNINNGCPHLHHKVHNRASEVGNGELYPGCNSSLKETYVDYDRLPHHLSNGRVMYTALPQADPTECINCRNCCNNNRCFTKPNGSYCGNGVAVMPVGFSPQQEEGETKPLNHVMVPMCLTSPDQNCSEEIEEDQNEKETQLSANSVCPEEATQTGTEQHEGEDCTKTEDDSSILTWTPLILPAISKDCDEKHVWTSTDITLDKSNVDHPQLQTQEA.

A signal peptide spans 1-25; sequence MHSDPGPWHPLLCFLVLALSTSANS. The Extracellular segment spans residues 26-957; it reads DVTPRFTSKP…PSHSPTRNGD (932 aa). Ig-like C2-type domains are found at residues 29-113, 120-212, 217-307, 314-400, and 406-517; these read PRFT…KSVS, NDFE…LKLS, PRVD…VYYT, PSVS…ATVH, and PVIV…AYLT. Cystine bridges form between C50–C98, C142–C192, and C244–C292. N-linked (GlcNAc...) asparagine glycosylation is found at N181, N289, N296, N344, and N428. 2 disulfide bridges follow: C335/C382 and C427/C501. Disordered stretches follow at residues 528 to 585 and 671 to 690; these read EDIT…SPPQ and TSKE…PPIG. The segment covering 545–566 has biased composition (basic and acidic residues); the sequence is SETRVPDHSQINEHKPEPRVTE. 3 Fibronectin type-III domains span residues 577–675, 721–815, and 826–923; these read APII…SKER, APDR…VAGY, and GPRI…TKAR. A glycan (N-linked (GlcNAc...) asparagine) is linked at N870. The interval 929-952 is disordered; it reads SEYPVLDLSTPSVPDRSSSPSHSP. Positions 937–952 are enriched in low complexity; sequence STPSVPDRSSSPSHSP. Residues 958–978 form a helical membrane-spanning segment; that stretch reads FLYVIVGCVLGGMVLILLAFI. Over 979-1249 the chain is Cytoplasmic; it reads AMCLLKNRQQ…DHPQLQTQEA (271 aa). A disordered region spans residues 1158 to 1202; it reads NCSEEIEEDQNEKETQLSANSVCPEEATQTGTEQHEGEDCTKTED. Acidic residues predominate over residues 1159-1168; that stretch reads CSEEIEEDQN. Over residues 1173-1189 the composition is skewed to polar residues; the sequence is QLSANSVCPEEATQTGT. Residues 1190–1202 show a composition bias toward basic and acidic residues; it reads EQHEGEDCTKTED.

It localises to the cell membrane. In terms of biological role, component of a cell-surface receptor complex that mediates cell-cell interactions between muscle precursor cells. Promotes differentiation of myogenic cells. This chain is Cell adhesion molecule-related/down-regulated by oncogenes (cdon), found in Xenopus laevis (African clawed frog).